The sequence spans 293 residues: DOMON domain-containing protein FRRS1L (293 aa).

A signal peptide spans methionine 1 to alanine 28. The interval serine 29–serine 61 is disordered. Basic and acidic residues predominate over residues alanine 46–serine 61. Positions cysteine 119–alanine 234 constitute a DOMON domain. The helical transmembrane segment at threonine 271–glycine 291 threads the bilayer.

In terms of assembly, component of the outer core of AMPAR complex. AMPAR complex consists of an inner core made of 4 pore-forming GluA/GRIA proteins (GRIA1, GRIA2, GRIA3 and GRIA4) and 4 major auxiliary subunits arranged in a twofold symmetry. One of the two pairs of distinct binding sites is occupied either by CNIH2, CNIH3 or CACNG2, CACNG3. The other harbors CACNG2, CACNG3, CACNG4, CACNG8 or GSG1L. This inner core of AMPAR complex is complemented by outer core constituents binding directly to the GluA/GRIA proteins at sites distinct from the interaction sites of the inner core constituents. Outer core constituents include at least PRRT1, PRRT2, CKAMP44/SHISA9, FRRS1L and NRN1. The proteins of the inner and outer core serve as a platform for other, more peripherally associated AMPAR constituents. Alone or in combination, these auxiliary subunits control the gating and pharmacology of the AMPAR complex and profoundly impact their biogenesis and protein processing. Expressed in adult and fetal brain. Very weak expression in medulla, spinal cord and in adult ovary.

It is found in the cell membrane. It localises to the synapse. Its function is as follows. Important modulator of glutamate signaling pathway. This chain is DOMON domain-containing protein FRRS1L (FRRS1L), found in Homo sapiens (Human).